The sequence spans 39 residues: Contryphan-Cal3 (39 aa).

A signal peptide spans 1–20 (MTRTAVLLLTLLFLVAMAAS). Residues cysteine 29 and cysteine 35 are joined by a disulfide bond.

Expressed by the venom duct.

The protein resides in the secreted. Functionally, probable neurotoxin. The polypeptide is Contryphan-Cal3 (Californiconus californicus (California cone)).